The chain runs to 327 residues: Mitochondrial thiamine pyrophosphate carrier 1 (327 aa).

3 Solcar repeats span residues 13-114 (GSKL…AAQL), 126-214 (PAAA…LRAP), and 222-317 (FWGG…VLRA). Helical transmembrane passes span 16–36 (LQVVVAGATAGMIARFVIAPL), 95–111 (LLYITYSAVQFATYRSA), 132–152 (FVAGAAAGVTSTTVTYPLDLL), 189–209 (GIGPAVGQTFPFMGIFFAAYE), 223–245 (WGGQLALASMTASTLAKTAVFPL), and 292–309 (GLTVSLIKSAPASAVTMW).

The protein belongs to the mitochondrial carrier (TC 2.A.29) family.

It localises to the mitochondrion inner membrane. Mitochondrial transporter that mediates uptake of thiamine pyrophosphate (ThPP) into mitochondria. The chain is Mitochondrial thiamine pyrophosphate carrier 1 (TPC1) from Pyricularia oryzae (strain 70-15 / ATCC MYA-4617 / FGSC 8958) (Rice blast fungus).